Here is a 188-residue protein sequence, read N- to C-terminus: dCTP deaminase (188 aa).

Residues 111–116 (KSTYAR), 135–137 (VLE), Gln-156, Tyr-170, and Gln-180 each bind dCTP. Glu-137 serves as the catalytic Proton donor/acceptor.

This sequence belongs to the dCTP deaminase family. Homotrimer.

It catalyses the reaction dCTP + H2O + H(+) = dUTP + NH4(+). Its pathway is pyrimidine metabolism; dUMP biosynthesis; dUMP from dCTP (dUTP route): step 1/2. Its function is as follows. Catalyzes the deamination of dCTP to dUTP. This chain is dCTP deaminase, found in Protochlamydia amoebophila (strain UWE25).